A 437-amino-acid polypeptide reads, in one-letter code: Carbonic anhydrase 9 (437 aa).

A signal peptide spans 1-31 (MASLGPSPWAPLSTPAPTAQLLLFLLLQVSA). A proteoglycan-like (PG) region spans residues 32-95 (QPQGLSGMQG…RMEESLGLED (64 aa)). Over 32–390 (QPQGLSGMQG…HVNSCFTAGD (359 aa)) the chain is Extracellular. Residues 34–118 (QGLSGMQGEP…HGDEKGGGHS (85 aa)) form a disordered region. The span at 50 to 79 (SGEDELGVDVLPSEEDAPEEADPPDGEDPP) shows a compositional bias: acidic residues. The catalytic stretch occupies residues 96 to 390 (LSTPEAPEHS…HVNSCFTAGD (295 aa)). O-linked (GlcNAc...) threonine glycosylation is present at Thr98. Residues 118–369 (SHWSYGGTLL…LNGRTIEASF (252 aa)) form the Alpha-carbonic anhydrase domain. A disulfide bridge links Cys135 with Cys315. Residue His179 is the Proton donor/acceptor of the active site. Zn(2+) is bound by residues His205, His207, and His230. A substrate-binding site is contributed by 311-312 (TT). A glycan (N-linked (GlcNAc...) asparagine) is linked at Asn325. Residues 391–411 (ILALVFGLLFAVTSIAFLLQL) form a helical membrane-spanning segment. Topologically, residues 412-437 (RRQHRHRSGTKDRVSYSPAEMTETGA) are cytoplasmic. Position 427 is a phosphotyrosine (Tyr427).

Belongs to the alpha-carbonic anhydrase family. In terms of assembly, forms oligomers linked by disulfide bonds. Zn(2+) is required as a cofactor. Post-translationally, asn-325 bears high-mannose type glycan structures.

It is found in the nucleus. The protein localises to the nucleolus. It localises to the cell membrane. The protein resides in the cell projection. Its subcellular location is the microvillus membrane. It catalyses the reaction hydrogencarbonate + H(+) = CO2 + H2O. Its activity is regulated as follows. Inhibited by acetazolamide. Functionally, catalyzes the interconversion between carbon dioxide and water and the dissociated ions of carbonic acid (i.e. bicarbonate and hydrogen ions). In Mus musculus (Mouse), this protein is Carbonic anhydrase 9 (Ca9).